A 76-amino-acid polypeptide reads, in one-letter code: Small nuclear ribonucleoprotein G (76 aa).

The 73-residue stretch at 4–76 folds into the Sm domain; sequence AHPPELKKFM…IIMLEALERV (73 aa).

Belongs to the snRNP Sm proteins family. As to quaternary structure, core component of the spliceosomal U1, U2, U4 and U5 small nuclear ribonucleoproteins (snRNPs), the building blocks of the spliceosome. Most spliceosomal snRNPs contain a common set of Sm proteins, SNRPB, SNRPD1, SNRPD2, SNRPD3, SNRPE, SNRPF and SNRPG that assemble in a heptameric protein ring on the Sm site of the small nuclear RNA to form the core snRNP. Component of the U1 snRNP. The U1 snRNP is composed of the U1 snRNA and the 7 core Sm proteins SNRPB, SNRPD1, SNRPD2, SNRPD3, SNRPE, SNRPF and SNRPG, and at least three U1 snRNP-specific proteins SNRNP70/U1-70K, SNRPA/U1-A and SNRPC/U1-C. Component of the U4/U6-U5 tri-snRNP complex composed of the U4, U6 and U5 snRNAs and at least PRPF3, PRPF4, PRPF6, PRPF8, PRPF31, SNRNP200, TXNL4A, SNRNP40, SNRPB, SNRPD1, SNRPD2, SNRPD3, SNRPE, SNRPF, SNRPG, DDX23, CD2BP2, PPIH, SNU13, EFTUD2, SART1 and USP39, plus LSM2, LSM3, LSM4, LSM5, LSM6, LSM7 and LSM8. Component of the U7 snRNP complex, or U7 Sm protein core complex, that is composed of the U7 snRNA and at least LSM10, LSM11, SNRPB, SNRPD3, SNRPE, SNRPF and SNRPG; the complex does not contain SNRPD1 and SNRPD2. Component of the minor spliceosome, which splices U12-type introns. Part of the SMN-Sm complex that contains SMN1, GEMIN2/SIP1, DDX20/GEMIN3, GEMIN4, GEMIN5, GEMIN6, GEMIN7, GEMIN8, STRAP/UNRIP and the Sm proteins SNRPB, SNRPD1, SNRPD2, SNRPD3, SNRPE, SNRPF and SNRPG; catalyzes core snRNPs assembly. Forms a 6S pICln-Sm complex composed of CLNS1A/pICln, SNRPD1, SNRPD2, SNRPE, SNRPF and SNRPG; ring-like structure where CLNS1A/pICln mimics additional Sm proteins and which is unable to assemble into the core snRNP. Interacts with GEMIN2 (via N-terminus); the interaction is direct. Interacts with SNRPE; the interaction is direct.

Its subcellular location is the cytoplasm. The protein localises to the cytosol. The protein resides in the nucleus. Functionally, plays a role in pre-mRNA splicing as a core component of the spliceosomal U1, U2, U4 and U5 small nuclear ribonucleoproteins (snRNPs), the building blocks of the spliceosome. Component of both the pre-catalytic spliceosome B complex and activated spliceosome C complexes. As a component of the minor spliceosome, involved in the splicing of U12-type introns in pre-mRNAs. As part of the U7 snRNP it is involved in histone 3'-end processing. The chain is Small nuclear ribonucleoprotein G (SNRPG) from Bos taurus (Bovine).